A 232-amino-acid polypeptide reads, in one-letter code: Cytidylate kinase (232 aa).

11-19 (GPAGAGKST) is an ATP binding site.

Belongs to the cytidylate kinase family. Type 1 subfamily.

The protein localises to the cytoplasm. It catalyses the reaction CMP + ATP = CDP + ADP. The catalysed reaction is dCMP + ATP = dCDP + ADP. The protein is Cytidylate kinase of Desulfitobacterium hafniense (strain Y51).